A 377-amino-acid polypeptide reads, in one-letter code: Probable O-methyltransferase 3 (377 aa).

Aspartate 241 contacts S-adenosyl-L-methionine. The Proton acceptor role is filled by histidine 279.

The protein belongs to the class I-like SAM-binding methyltransferase superfamily. Cation-independent O-methyltransferase family. In terms of tissue distribution, highly expressed in lupulin glands. Detected in early-, mid- and late-stage cones.

The polypeptide is Probable O-methyltransferase 3 (Humulus lupulus (European hop)).